A 498-amino-acid chain; its full sequence is DNA primase (498 aa).

A CHC2-type zinc finger spans residues 35-59 (CPFHPDDTPSFYVSPSKQIFKCFGC). A Toprim domain is found at 243-324 (GFAILVEGYF…EVYPVYLPEG (82 aa)). 3 residues coordinate Mg(2+): glutamate 249, aspartate 293, and aspartate 295.

The protein belongs to the DnaG primase family. Monomer. Interacts with DnaB. The cofactor is Zn(2+). It depends on Mg(2+) as a cofactor.

The enzyme catalyses ssDNA + n NTP = ssDNA/pppN(pN)n-1 hybrid + (n-1) diphosphate.. Its function is as follows. RNA polymerase that catalyzes the synthesis of short RNA molecules used as primers for DNA polymerase during DNA replication. The chain is DNA primase from Aquifex aeolicus (strain VF5).